The chain runs to 85 residues: Putative defensin-like protein 79 (85 aa).

Positions 1 to 31 are cleaved as a signal peptide; sequence MKSEKSADAYGTYFLLISTIFLLFIARQASS. 4 disulfides stabilise this stretch: Cys37/Cys69, Cys44/Cys60, Cys47/Cys67, and Cys51/Cys68.

It belongs to the DEFL family.

The protein localises to the secreted. The protein is Putative defensin-like protein 79 of Arabidopsis thaliana (Mouse-ear cress).